The chain runs to 644 residues: Exoribonuclease 2 (644 aa).

The region spanning 189–516 (RRDLTALDFV…NHRLLKAIIK (328 aa)) is the RNB domain. Residues 561 to 643 (DTRFAAEILD…ETRSIIARPA (83 aa)) form the S1 motif domain.

This sequence belongs to the RNR ribonuclease family. RNase II subfamily.

It is found in the cytoplasm. It carries out the reaction Exonucleolytic cleavage in the 3'- to 5'-direction to yield nucleoside 5'-phosphates.. Its function is as follows. Involved in mRNA degradation. Hydrolyzes single-stranded polyribonucleotides processively in the 3' to 5' direction. This Klebsiella pneumoniae (strain 342) protein is Exoribonuclease 2.